The chain runs to 446 residues: Bifunctional protein GlmU (446 aa).

The interval 1–225 (MEGIILAAGK…ETEVYGVNDR (225 aa)) is pyrophosphorylase. UDP-N-acetyl-alpha-D-glucosamine-binding positions include 6-9 (LAAG), Lys-20, Gln-70, and 75-76 (GT). Residue Asp-98 coordinates Mg(2+). Gly-135, Glu-150, Asn-165, and Asn-223 together coordinate UDP-N-acetyl-alpha-D-glucosamine. Mg(2+) is bound at residue Asn-223. Residues 226–246 (VQLARLTKGVYRRKAEALMQE) are linker. The interval 247-446 (GVTIIDPETV…RQVNKEDYVK (200 aa)) is N-acetyltransferase. The UDP-N-acetyl-alpha-D-glucosamine site is built by Arg-328 and Lys-346. His-358 acts as the Proton acceptor in catalysis. Positions 361 and 372 each coordinate UDP-N-acetyl-alpha-D-glucosamine. Acetyl-CoA contacts are provided by residues Ala-375, 381–382 (NY), Ser-400, Ala-418, and Arg-435.

It in the N-terminal section; belongs to the N-acetylglucosamine-1-phosphate uridyltransferase family. The protein in the C-terminal section; belongs to the transferase hexapeptide repeat family. In terms of assembly, homotrimer. It depends on Mg(2+) as a cofactor.

It localises to the cytoplasm. The catalysed reaction is alpha-D-glucosamine 1-phosphate + acetyl-CoA = N-acetyl-alpha-D-glucosamine 1-phosphate + CoA + H(+). It carries out the reaction N-acetyl-alpha-D-glucosamine 1-phosphate + UTP + H(+) = UDP-N-acetyl-alpha-D-glucosamine + diphosphate. The protein operates within nucleotide-sugar biosynthesis; UDP-N-acetyl-alpha-D-glucosamine biosynthesis; N-acetyl-alpha-D-glucosamine 1-phosphate from alpha-D-glucosamine 6-phosphate (route II): step 2/2. It participates in nucleotide-sugar biosynthesis; UDP-N-acetyl-alpha-D-glucosamine biosynthesis; UDP-N-acetyl-alpha-D-glucosamine from N-acetyl-alpha-D-glucosamine 1-phosphate: step 1/1. It functions in the pathway bacterial outer membrane biogenesis; LPS lipid A biosynthesis. Catalyzes the last two sequential reactions in the de novo biosynthetic pathway for UDP-N-acetylglucosamine (UDP-GlcNAc). The C-terminal domain catalyzes the transfer of acetyl group from acetyl coenzyme A to glucosamine-1-phosphate (GlcN-1-P) to produce N-acetylglucosamine-1-phosphate (GlcNAc-1-P), which is converted into UDP-GlcNAc by the transfer of uridine 5-monophosphate (from uridine 5-triphosphate), a reaction catalyzed by the N-terminal domain. The protein is Bifunctional protein GlmU of Carboxydothermus hydrogenoformans (strain ATCC BAA-161 / DSM 6008 / Z-2901).